Here is a 555-residue protein sequence, read N- to C-terminus: MASKNTYSDFKLATELPAWNQLQSLYEQKGKKLNVKDEFAKDNSRYEKFAKTFVNYDGSKILFDFSKNLVDDEILKSLIQLAKEAKVTSLRDAMFNGEPINFTEGRAVYHVALRNRSLKPMYVDGTNVTPEVDAVLQHMKEFTEEVRSGAWKGYTGKSITDVVNIGIGGSDLGPVMVTEALKHYATNLKVHFVSNIDGTHIAETLKDLDHETTLFLIASKTFTTAETITNATSAKNWFLSKNGGDQSHISKHFAALSTNATEVEKFGIDTKNMFGFENWVGGRYSVWSAIGLSVALYIGFDNFEAFLKGAEAVDKHFVETPLEDNIPLLGGLLSVWYNNFFDAQTHLVAPFDQYLHRFPAYLQQLSMESNGKSVTRGNVFANYSTGSILFGEPATNAQHSFFQLIHQGTKLIPSDFILAAQSHNPIENNLHQKMLASNFFAQAEALMVGKDEEQVKSEGATGGLVPHKVFSGNRPTTSILAQKITPATLGALIAYYEHVTFTEGAIWNINSFDQWGVELGKVLAKVIGSELATDNKISSHDSSTNGLINQFKEWI.

D-glucose 6-phosphate-binding positions include 169–170, 219–224, Gln364, Glu368, His399, and Lys521; these read GS and SKTFTT. The active-site Proton donor is the Glu368. Active-site residues include His399 and Lys521.

This sequence belongs to the GPI family. In terms of assembly, homodimer.

The protein localises to the cytoplasm. The protein resides in the cytosol. The enzyme catalyses alpha-D-glucose 6-phosphate = beta-D-fructose 6-phosphate. Its pathway is carbohydrate degradation; glycolysis; D-glyceraldehyde 3-phosphate and glycerone phosphate from D-glucose: step 2/4. Functionally, in the cytoplasm, catalyzes the conversion of glucose-6-phosphate to fructose-6-phosphate, the second step in glycolysis, and the reverse reaction during gluconeogenesis. The sequence is that of Glucose-6-phosphate isomerase (RAG2) from Kluyveromyces lactis (strain ATCC 8585 / CBS 2359 / DSM 70799 / NBRC 1267 / NRRL Y-1140 / WM37) (Yeast).